Consider the following 153-residue polypeptide: E3 ubiquitin-protein ligase AIRP1 (153 aa).

Residues 104–145 (CPICLEEYEIDNPKLLTKCGHDFHLACILAWMERSEACPVCD) form an RING-type; atypical zinc finger.

Its subcellular location is the cytoplasm. It is found in the cytosol. It catalyses the reaction S-ubiquitinyl-[E2 ubiquitin-conjugating enzyme]-L-cysteine + [acceptor protein]-L-lysine = [E2 ubiquitin-conjugating enzyme]-L-cysteine + N(6)-ubiquitinyl-[acceptor protein]-L-lysine.. Possesses E3 ubiquitin-protein ligase activity in vitro when associated with the E2 enzyme UBC8 in vitro. Plays combinatory roles with AIRP2 in the positive regulation of the abscisic acid-mediated drought stress response. The protein is E3 ubiquitin-protein ligase AIRP1 of Arabidopsis thaliana (Mouse-ear cress).